The sequence spans 520 residues: Nucleobase-ascorbate transporter 1 (520 aa).

A run of 12 helical transmembrane segments spans residues 36–56 (YILM…AMGG), 64–84 (VIQT…LFGT), 86–106 (LPAV…IIND), 129–149 (ALIV…WGLF), 150–170 (SRFF…LGMF), 174–194 (FPQL…VIGL), 213–233 (FPIL…TASG), 279–299 (FAMM…YIAA), 362–382 (GFMI…SIPV), 384–404 (IYAA…LSFL), 415–435 (LMIT…FAQY), and 453–473 (AFLN…AVFM).

The protein belongs to the nucleobase:cation symporter-2 (NCS2) (TC 2.A.40) family. Expressed in cotyledons 4 days after imbibition (DAI). Expressed in the minor and major veins of cotyledons and leaves, in the shoot apex and pedicels. Expressed in the root meristems, root tips and lateral root primordia.

It is found in the membrane. This is Nucleobase-ascorbate transporter 1 (NAT1) from Arabidopsis thaliana (Mouse-ear cress).